Reading from the N-terminus, the 329-residue chain is Protoheme IX farnesyltransferase (329 aa).

The next 7 membrane-spanning stretches (helical) occupy residues 61 to 81, 108 to 128, 130 to 150, 158 to 178, 186 to 206, 243 to 263, and 284 to 304; these read LACT…LNCL, AFLI…AGVN, LAAG…TIVL, IVIG…AATG, WLFG…ALLL, LLGV…VLPF, and AKGL…LLLL.

The protein belongs to the UbiA prenyltransferase family. Protoheme IX farnesyltransferase subfamily.

The protein localises to the cell inner membrane. It catalyses the reaction heme b + (2E,6E)-farnesyl diphosphate + H2O = Fe(II)-heme o + diphosphate. Its pathway is porphyrin-containing compound metabolism; heme O biosynthesis; heme O from protoheme: step 1/1. In terms of biological role, converts heme B (protoheme IX) to heme O by substitution of the vinyl group on carbon 2 of heme B porphyrin ring with a hydroxyethyl farnesyl side group. This Synechococcus sp. (strain RCC307) protein is Protoheme IX farnesyltransferase.